The chain runs to 556 residues: Formate--tetrahydrofolate ligase (556 aa).

T64–T71 contacts ATP.

It belongs to the formate--tetrahydrofolate ligase family.

It catalyses the reaction (6S)-5,6,7,8-tetrahydrofolate + formate + ATP = (6R)-10-formyltetrahydrofolate + ADP + phosphate. Its pathway is one-carbon metabolism; tetrahydrofolate interconversion. The protein is Formate--tetrahydrofolate ligase of Haemophilus ducreyi (strain 35000HP / ATCC 700724).